The following is a 225-amino-acid chain: Transmembrane protein 40 (225 aa).

N-acetylmethionine is present on Met-1. Over residues 1-14 (MEASGSSSQSQDSG) the composition is skewed to low complexity. The tract at residues 1 to 96 (MEASGSSSQS…RRDSLRGADH (96 aa)) is disordered. Over residues 15 to 29 (GVHRETEDHYQETEL) the composition is skewed to basic and acidic residues. Residues 30–39 (HKHHGKARER) are compositionally biased toward basic residues. The span at 46–68 (SSSSSSSSSSSSSSSSSSSSSSD) shows a compositional bias: low complexity. Positions 78 to 87 (GPRKHRRRPR) are enriched in basic residues. Ser-129 is modified (phosphoserine). 2 consecutive transmembrane segments (helical) span residues 152–172 (FFHFVLLCFAIGALLVCYHYY) and 179–199 (LGVGLLTFASLETIGIYFGLV).

Its subcellular location is the membrane. This Mus musculus (Mouse) protein is Transmembrane protein 40 (Tmem40).